The sequence spans 347 residues: tRNA N6-adenosine threonylcarbamoyltransferase (347 aa).

Histidine 113 and histidine 117 together coordinate Fe cation. Substrate contacts are provided by residues 136-140 (IVSGG), aspartate 170, glycine 183, aspartate 187, and asparagine 282. Aspartate 310 provides a ligand contact to Fe cation.

The protein belongs to the KAE1 / TsaD family. It depends on Fe(2+) as a cofactor.

Its subcellular location is the cytoplasm. It carries out the reaction L-threonylcarbamoyladenylate + adenosine(37) in tRNA = N(6)-L-threonylcarbamoyladenosine(37) in tRNA + AMP + H(+). In terms of biological role, required for the formation of a threonylcarbamoyl group on adenosine at position 37 (t(6)A37) in tRNAs that read codons beginning with adenine. Is involved in the transfer of the threonylcarbamoyl moiety of threonylcarbamoyl-AMP (TC-AMP) to the N6 group of A37, together with TsaE and TsaB. TsaD likely plays a direct catalytic role in this reaction. The protein is tRNA N6-adenosine threonylcarbamoyltransferase of Bifidobacterium longum (strain NCC 2705).